The primary structure comprises 230 residues: Orotidine 5'-phosphate decarboxylase (230 aa).

Substrate contacts are provided by residues D11, K34, 61–70, T117, R179, Q188, G208, and R209; that span reads DLKLHDIPNT. Catalysis depends on K63, which acts as the Proton donor.

It belongs to the OMP decarboxylase family. Type 1 subfamily. Homodimer.

It carries out the reaction orotidine 5'-phosphate + H(+) = UMP + CO2. It functions in the pathway pyrimidine metabolism; UMP biosynthesis via de novo pathway; UMP from orotate: step 2/2. In terms of biological role, catalyzes the decarboxylation of orotidine 5'-monophosphate (OMP) to uridine 5'-monophosphate (UMP). This Streptococcus pyogenes serotype M28 (strain MGAS6180) protein is Orotidine 5'-phosphate decarboxylase.